A 113-amino-acid chain; its full sequence is Putative membrane protein insertion efficiency factor (113 aa).

The protein belongs to the UPF0161 family.

The protein localises to the cell inner membrane. Could be involved in insertion of integral membrane proteins into the membrane. The polypeptide is Putative membrane protein insertion efficiency factor (Campylobacter concisus (strain 13826)).